We begin with the raw amino-acid sequence, 93 residues long: Probable Fe(2+)-trafficking protein (93 aa).

It belongs to the Fe(2+)-trafficking protein family.

Functionally, could be a mediator in iron transactions between iron acquisition and iron-requiring processes, such as synthesis and/or repair of Fe-S clusters in biosynthetic enzymes. The chain is Probable Fe(2+)-trafficking protein from Polaromonas naphthalenivorans (strain CJ2).